The following is a 310-amino-acid chain: tRNA uridine(34) hydroxylase (310 aa).

Residues 134 to 232 (DDPDTLLIDT…YFEEVSQSES (99 aa)) form the Rhodanese domain. Residue cysteine 192 is the Cysteine persulfide intermediate of the active site.

This sequence belongs to the TrhO family.

The catalysed reaction is uridine(34) in tRNA + AH2 + O2 = 5-hydroxyuridine(34) in tRNA + A + H2O. In terms of biological role, catalyzes oxygen-dependent 5-hydroxyuridine (ho5U) modification at position 34 in tRNAs. The protein is tRNA uridine(34) hydroxylase of Prochlorococcus marinus (strain MIT 9303).